Here is a 342-residue protein sequence, read N- to C-terminus: S-adenosylmethionine:tRNA ribosyltransferase-isomerase (342 aa).

It belongs to the QueA family. As to quaternary structure, monomer.

It localises to the cytoplasm. The enzyme catalyses 7-aminomethyl-7-carbaguanosine(34) in tRNA + S-adenosyl-L-methionine = epoxyqueuosine(34) in tRNA + adenine + L-methionine + 2 H(+). Its pathway is tRNA modification; tRNA-queuosine biosynthesis. Transfers and isomerizes the ribose moiety from AdoMet to the 7-aminomethyl group of 7-deazaguanine (preQ1-tRNA) to give epoxyqueuosine (oQ-tRNA). The chain is S-adenosylmethionine:tRNA ribosyltransferase-isomerase from Streptococcus pyogenes serotype M3 (strain ATCC BAA-595 / MGAS315).